The chain runs to 152 residues: D-aminoacyl-tRNA deacylase (152 aa).

Residues 142–143 (GP) carry the Gly-cisPro motif, important for rejection of L-amino acids motif.

It belongs to the DTD family. In terms of assembly, homodimer.

Its subcellular location is the cytoplasm. The catalysed reaction is glycyl-tRNA(Ala) + H2O = tRNA(Ala) + glycine + H(+). It carries out the reaction a D-aminoacyl-tRNA + H2O = a tRNA + a D-alpha-amino acid + H(+). An aminoacyl-tRNA editing enzyme that deacylates mischarged D-aminoacyl-tRNAs. Also deacylates mischarged glycyl-tRNA(Ala), protecting cells against glycine mischarging by AlaRS. Acts via tRNA-based rather than protein-based catalysis; rejects L-amino acids rather than detecting D-amino acids in the active site. By recycling D-aminoacyl-tRNA to D-amino acids and free tRNA molecules, this enzyme counteracts the toxicity associated with the formation of D-aminoacyl-tRNA entities in vivo and helps enforce protein L-homochirality. The protein is D-aminoacyl-tRNA deacylase of Burkholderia cenocepacia (strain HI2424).